Here is a 430-residue protein sequence, read N- to C-terminus: Asparagine--tRNA ligase (430 aa).

Belongs to the class-II aminoacyl-tRNA synthetase family. Homodimer.

Its subcellular location is the cytoplasm. The catalysed reaction is tRNA(Asn) + L-asparagine + ATP = L-asparaginyl-tRNA(Asn) + AMP + diphosphate + H(+). The polypeptide is Asparagine--tRNA ligase (Listeria innocua serovar 6a (strain ATCC BAA-680 / CLIP 11262)).